A 341-amino-acid polypeptide reads, in one-letter code: Inner membrane ABC transporter permease protein YejE (341 aa).

Topologically, residues 1–21 (MSRLSPVNQARWARFRHNRRG) are cytoplasmic. The helical transmembrane segment at 22–42 (YWSLWIFLVLFGLSLCSELIA) threads the bilayer. Topologically, residues 43–143 (NDKPLLVRYD…ARILYGTRIS (101 aa)) are periplasmic. Residues 140–332 (TRISVLFGLM…LLIFIGEAVR (193 aa)) enclose the ABC transmembrane type-1 domain. A helical membrane pass occupies residues 144 to 164 (VLFGLMLTLCSSVMGVLAGAL). The Cytoplasmic segment spans residues 165 to 178 (QGYYGGKVDLWGQR). The helical transmembrane segment at 179 to 199 (FIEVWSGMPTLFLIILLSSVV) threads the bilayer. The Periplasmic portion of the chain corresponds to 200-201 (QP). A helical transmembrane segment spans residues 202–222 (NFWWLLAITVLFGWMSLVGVV). The Cytoplasmic segment spans residues 223–252 (RAEFLRTRNFDYIRAAQALGVSDRSIILRH). A helical membrane pass occupies residues 253–273 (MLPNAMVATLTFLPFILCSSI). Topologically, residues 274–307 (TTLTSLDFLGFGLPLGSPSLGELLLQGKNNLQAP) are periplasmic. Residues 308–328 (WLGITAFLSVAILLSLLIFIG) form a helical membrane-spanning segment. Residues 329–341 (EAVRDAFDPNKAV) are Cytoplasmic-facing.

It belongs to the binding-protein-dependent transport system permease family. OppBC subfamily.

The protein resides in the cell inner membrane. Its function is as follows. Probably part of a binding-protein-dependent transport system. Probably responsible for the translocation of the substrate across the membrane. This chain is Inner membrane ABC transporter permease protein YejE (yejE), found in Escherichia coli (strain K12).